The following is a 486-amino-acid chain: MATFKDACYQYKKLNKLNNAILKLGANDVWRSSTLTKRKGWCLDCCQHTDLTYCQGCLIYHVCEWCSQYSRCFLDDDPHLLRMRTFRNEVTKSDLENLINMYDTLFPINQKIVNKFTNIIKQHKCRNEYLTQWYNHFLMPITLQSLSIELDGDIYYIFGYYDDMHKINQTPFSFANLINKYDVLLLDSINFDRMAFLPLTLQQEYALRYFSKSRFITERRKYIETLHFSDNILNNLHNPNFTLQVIRNCSNMSVEWNKACNLIRNISDYFDILKSSHTESYNISPRCRMFTQYKLKIASKLIKPNYVASNHNSLATEVHNCKWCSINNNSIVWTDFRIKNVYNDVFNFIRALVKSNLYVGHCSSEERIYESIKDILNVCKENEWNMLVTEIFNQLDPIKLNEDSYVLLNYEINWNVMNVLINSIGKIPKILTLNDVISILRIIIYDWFDIRFMRNTPMTTFTVNKLKQLYEKDKTAEYDSGISDVE.

An RNA-binding region spans residues 1-81; that stretch reads MATFKDACYQ…CFLDDDPHLL (81 aa). The segment at 42 to 79 is zinc-binding domain; sequence CLDCCQHTDLTYCQGCLIYHVCEWCSQYSRCFLDDDPH. The interval 82–176 is important for cytoskeleton localization; sequence RMRTFRNEVT…INQTPFSFAN (95 aa). Residues 317–486 are interaction with host IRF3; that stretch reads EVHNCKWCSI…EYDSGISDVE (170 aa). The short motif at 479-483 is the IKBKB-like degron (ILD) motif element; sequence DSGIS. Residues 480 to 483 carry the pLxIS motif motif; sequence SGIS.

The protein belongs to the rotavirus NSP1 family. In terms of assembly, interacts (via C-terminus) with host IRF3; this interaction leads to IRF3 degradation. Interacts with host IRF7; this interaction leads to IRF7 degradation. Interacts with host CUL1 and CUL3. Interacts with host BTRC. Post-translationally, the C-terminal region is phosphorylated by host CKII/CSNK2A1. Phosphorylation of the DSGXS motif is essential for host NF-kappa-B inhibition.

It localises to the host cytoplasm. Its subcellular location is the host cytoskeleton. Functionally, plays a role in the inhibition of host innate immunity by inducing the degradation of key host factors required to activate interferon production such as IRF3, IRF5 or IRF7. Associates with components of cullin RING ligases (CRLs) including CUL1 or CUL3, which are essential multisubunit ubiquitination complexes, to modulate their activities. Recognizes the host NF-kappa-B regulator BTRC through the presence of a DSGXS motif in the C-terminal substrate recognition domain. The protein is Non-structural protein 1 of Rotavirus A (strain RVA/Human/Indonesia/69M/1980/G8P4[10]) (RV-A).